The primary structure comprises 302 residues: tRNA dimethylallyltransferase (302 aa).

9-16 (GPTGTGKS) lines the ATP pocket. Residue 11–16 (TGTGKS) coordinates substrate.

It belongs to the IPP transferase family. In terms of assembly, monomer. It depends on Mg(2+) as a cofactor.

The catalysed reaction is adenosine(37) in tRNA + dimethylallyl diphosphate = N(6)-dimethylallyladenosine(37) in tRNA + diphosphate. Functionally, catalyzes the transfer of a dimethylallyl group onto the adenine at position 37 in tRNAs that read codons beginning with uridine, leading to the formation of N6-(dimethylallyl)adenosine (i(6)A). The polypeptide is tRNA dimethylallyltransferase (Mycolicibacterium smegmatis (strain ATCC 700084 / mc(2)155) (Mycobacterium smegmatis)).